Consider the following 352-residue polypeptide: S-adenosylmethionine:tRNA ribosyltransferase-isomerase (352 aa).

This sequence belongs to the QueA family. In terms of assembly, monomer.

The protein resides in the cytoplasm. The catalysed reaction is 7-aminomethyl-7-carbaguanosine(34) in tRNA + S-adenosyl-L-methionine = epoxyqueuosine(34) in tRNA + adenine + L-methionine + 2 H(+). It participates in tRNA modification; tRNA-queuosine biosynthesis. Functionally, transfers and isomerizes the ribose moiety from AdoMet to the 7-aminomethyl group of 7-deazaguanine (preQ1-tRNA) to give epoxyqueuosine (oQ-tRNA). This Syntrophomonas wolfei subsp. wolfei (strain DSM 2245B / Goettingen) protein is S-adenosylmethionine:tRNA ribosyltransferase-isomerase.